The sequence spans 446 residues: 5-methylthioadenosine/S-adenosylhomocysteine deaminase (446 aa).

Residues histidine 72 and histidine 74 each contribute to the Zn(2+) site. Positions 101 and 194 each coordinate substrate. Residue histidine 221 participates in Zn(2+) binding. Substrate-binding residues include glutamate 224 and aspartate 309. Aspartate 309 contacts Zn(2+).

Belongs to the metallo-dependent hydrolases superfamily. MTA/SAH deaminase family. Zn(2+) is required as a cofactor.

The catalysed reaction is S-adenosyl-L-homocysteine + H2O + H(+) = S-inosyl-L-homocysteine + NH4(+). It carries out the reaction S-methyl-5'-thioadenosine + H2O + H(+) = S-methyl-5'-thioinosine + NH4(+). Catalyzes the deamination of 5-methylthioadenosine and S-adenosyl-L-homocysteine into 5-methylthioinosine and S-inosyl-L-homocysteine, respectively. Is also able to deaminate adenosine. This is 5-methylthioadenosine/S-adenosylhomocysteine deaminase from Saccharophagus degradans (strain 2-40 / ATCC 43961 / DSM 17024).